Here is a 445-residue protein sequence, read N- to C-terminus: Phosphoglucosamine mutase (445 aa).

S99 acts as the Phosphoserine intermediate in catalysis. Mg(2+) contacts are provided by S99, D242, D244, and D246. S99 carries the phosphoserine modification.

This sequence belongs to the phosphohexose mutase family. The cofactor is Mg(2+). In terms of processing, activated by phosphorylation.

It carries out the reaction alpha-D-glucosamine 1-phosphate = D-glucosamine 6-phosphate. Functionally, catalyzes the conversion of glucosamine-6-phosphate to glucosamine-1-phosphate. This is Phosphoglucosamine mutase from Sulfurovum sp. (strain NBC37-1).